Consider the following 78-residue polypeptide: MARHCELTGKKANNAFSISHSHRRTKRLQHANLQWKRIWWEEGKRWVKLRLSTKAIKTLEKKGLASMAKEAGINLNQY.

This sequence belongs to the bacterial ribosomal protein bL28 family.

The polypeptide is Large ribosomal subunit protein bL28 (Gloeothece citriformis (strain PCC 7424) (Cyanothece sp. (strain PCC 7424))).